A 474-amino-acid chain; its full sequence is uncharacterized protein (474 aa).

Helical transmembrane passes span 17–39 (ILGG…SVYY), 44–61 (FLNF…GFVL), 81–103 (LAWL…YFSY), 144–166 (GVGI…YLLY), 186–208 (IIWI…GLSF), 239–256 (IVMI…FSIH), 268–286 (IQTK…IISI), 319–341 (LSLF…TGGV), 385–407 (AFVV…IALG), and 444–466 (IIAM…TLYF).

It belongs to the TrkH potassium transport family.

The protein localises to the cell membrane. This is an uncharacterized protein from Methanocaldococcus jannaschii (strain ATCC 43067 / DSM 2661 / JAL-1 / JCM 10045 / NBRC 100440) (Methanococcus jannaschii).